Here is a 282-residue protein sequence, read N- to C-terminus: Plant cysteine oxidase 3 (282 aa).

Fe cation-binding residues include His131, His133, and His202.

This sequence belongs to the cysteine dioxygenase family. Fe(2+) serves as cofactor.

The protein localises to the nucleus. It localises to the cytoplasm. It catalyses the reaction L-cysteine + O2 = 3-sulfino-L-alanine + H(+). Catalyzes the oxidation of N-terminal cysteine residues (N-Cys), thus preparing the protein for N-end rule pathway-mediated proteasomal degradation, upstream of the N-end rule enzymes ATE1, ATE2 and PRT6. Controls the preparation of the group VII ethylene response factor (ERF-VII) proteins for degradation via the 26S proteasome N-end rule pathway. Acts as an oxygen sensor that controls the stability of ERF-VII proteins, which are stabilized in flooding-induced hypoxia, and regulate transcriptional adaptation to these adverse conditions. This Arabidopsis thaliana (Mouse-ear cress) protein is Plant cysteine oxidase 3.